The following is a 139-amino-acid chain: ATP synthase epsilon chain (139 aa).

The protein belongs to the ATPase epsilon chain family. In terms of assembly, F-type ATPases have 2 components, CF(1) - the catalytic core - and CF(0) - the membrane proton channel. CF(1) has five subunits: alpha(3), beta(3), gamma(1), delta(1), epsilon(1). CF(0) has three main subunits: a, b and c.

Its subcellular location is the cell inner membrane. Its function is as follows. Produces ATP from ADP in the presence of a proton gradient across the membrane. This is ATP synthase epsilon chain from Pseudomonas syringae pv. tomato (strain ATCC BAA-871 / DC3000).